Consider the following 303-residue polypeptide: Sulfate adenylyltransferase subunit 2 (303 aa).

This sequence belongs to the PAPS reductase family. CysD subfamily. As to quaternary structure, heterodimer composed of CysD, the smaller subunit, and CysN.

It catalyses the reaction sulfate + ATP + H(+) = adenosine 5'-phosphosulfate + diphosphate. Its pathway is sulfur metabolism; hydrogen sulfide biosynthesis; sulfite from sulfate: step 1/3. With CysN forms the ATP sulfurylase (ATPS) that catalyzes the adenylation of sulfate producing adenosine 5'-phosphosulfate (APS) and diphosphate, the first enzymatic step in sulfur assimilation pathway. APS synthesis involves the formation of a high-energy phosphoric-sulfuric acid anhydride bond driven by GTP hydrolysis by CysN coupled to ATP hydrolysis by CysD. This chain is Sulfate adenylyltransferase subunit 2, found in Bacteroides fragilis (strain YCH46).